The following is a 143-amino-acid chain: Peptidyl-prolyl cis-trans isomerase B (143 aa).

A PPIase cyclophilin-type domain is found at 1 to 143 (MKTGYFLLED…DVMKEVRVEG (143 aa)).

The protein belongs to the cyclophilin-type PPIase family.

It localises to the cytoplasm. It catalyses the reaction [protein]-peptidylproline (omega=180) = [protein]-peptidylproline (omega=0). Inhibited by cyclosporin A (CsA). Functionally, PPIases accelerate the folding of proteins. It catalyzes the cis-trans isomerization of proline imidic peptide bonds in oligopeptides. This Bacillus subtilis (strain 168) protein is Peptidyl-prolyl cis-trans isomerase B (ppiB).